Consider the following 66-residue polypeptide: Sec-independent protein translocase protein TatA (66 aa).

A helical transmembrane segment spans residues 1 to 21 (MIGGLGMPELIIILVIILIIF). Residues 45 to 66 (RDAELNEGDKDDKEKEQEKLDK) form a disordered region.

It belongs to the TatA/E family. In terms of assembly, the Tat system comprises two distinct complexes: a TatABC complex, containing multiple copies of TatA, TatB and TatC subunits, and a separate TatA complex, containing only TatA subunits. Substrates initially bind to the TatABC complex, which probably triggers association of the separate TatA complex to form the active translocon.

It is found in the cell inner membrane. In terms of biological role, part of the twin-arginine translocation (Tat) system that transports large folded proteins containing a characteristic twin-arginine motif in their signal peptide across membranes. TatA could form the protein-conducting channel of the Tat system. This Desulforapulum autotrophicum (strain ATCC 43914 / DSM 3382 / VKM B-1955 / HRM2) (Desulfobacterium autotrophicum) protein is Sec-independent protein translocase protein TatA.